Consider the following 167-residue polypeptide: T-cell surface glycoprotein CD3 delta chain (167 aa).

The signal sequence occupies residues 1–21 (MEHSRCLSCLILAALLSQVNP). Residues 22–100 (RALEVLEAED…NCVELDSATL (79 aa)) are Extracellular-facing. Cys37 and Cys73 are disulfide-bonded. 2 N-linked (GlcNAc...) asparagine glycosylation sites follow: Asn38 and Asn55. The helical transmembrane segment at 101 to 121 (AGLIITDIIATVLLALGVYCF) threads the bilayer. The Cytoplasmic portion of the chain corresponds to 122–167 (AGHETGRFSRAADTQVLMGNDQLYQPLRERNDAQYSRLGDKWARNK). In terms of domain architecture, ITAM spans 134–162 (DTQVLMGNDQLYQPLRERNDAQYSRLGDK). Tyr145 and Tyr156 each carry phosphotyrosine.

As to quaternary structure, the TCR-CD3 complex is composed of a CD3D/CD3E and a CD3G/CD3E heterodimers that preferentially associate with TCRalpha and TCRbeta, respectively, to form TCRalpha/CD3E/CD3G and TCRbeta/CD3G/CD3E trimers. In turn, the hexamer interacts with CD3Z homodimer to form the TCR-CD3 complex. Alternatively, TCRalpha and TCRbeta can be replaced by TCRgamma and TCRdelta. Interacts with coreceptors CD4 and CD8. In terms of processing, phosphorylated on Tyr residues after T-cell receptor triggering by LCK in association with CD4/CD8. As to expression, CD3D is mostly present on T-lymphocytes with its TCR-CD3 partners. Present also in fetal NK-cells.

It localises to the cell membrane. Functionally, part of the TCR-CD3 complex present on T-lymphocyte cell surface that plays an essential role in adaptive immune response. When antigen presenting cells (APCs) activate T-cell receptor (TCR), TCR-mediated signals are transmitted across the cell membrane by the CD3 chains CD3D, CD3E, CD3G and CD3Z. All CD3 chains contain immunoreceptor tyrosine-based activation motifs (ITAMs) in their cytoplasmic domain. Upon TCR engagement, these motifs become phosphorylated by Src family protein tyrosine kinases LCK and FYN, resulting in the activation of downstream signaling pathways. In addition of this role of signal transduction in T-cell activation, CD3D plays an essential role in thymocyte differentiation. Indeed, participates in correct intracellular TCR-CD3 complex assembly and surface expression. In absence of a functional TCR-CD3 complex, thymocytes are unable to differentiate properly. Interacts with CD4 and CD8 and thus serves to establish a functional link between the TCR and coreceptors CD4 and CD8, which is needed for activation and positive selection of CD4 or CD8 T-cells. The polypeptide is T-cell surface glycoprotein CD3 delta chain (CD3D) (Ovis aries (Sheep)).